The chain runs to 63 residues: Adipokinetic prohormone type 1 (63 aa).

Residues 1–22 form the signal peptide; sequence MVQRCLVVALLVVVVAAALCSA. Gln-23 is modified (pyrrolidone carboxylic acid). Thr-32 carries the post-translational modification Threonine amide.

The protein belongs to the AKH/HRTH/RPCH family. In terms of assembly, adipokinetic hormone precursor-related peptide (APRP) can form three type of disulfide-bond dimers: p1 (alpha-alpha), p2 (alpha-beta), and p3 (beta-beta).

Its subcellular location is the secreted. Its function is as follows. This hormone, released from cells in the corpora cardiaca, causes release of diglycerides from the fat body and stimulation of muscles to use these diglycerides as an energy source during energy-demanding processes. This is Adipokinetic prohormone type 1 from Schistocerca gregaria (Desert locust).